Reading from the N-terminus, the 1323-residue chain is Glutamate receptor ionotropic, NMDA 2D (1323 aa).

The signal sequence occupies residues 1-27 (MRGAGGPRGPRGPAKMLLLLALACASP). Residues 28 to 579 (FPEEVPGPGA…SPSAFLEPYS (552 aa)) lie on the Extracellular side of the membrane. N89 is a glycosylation site (N-linked (GlcNAc...) asparagine). An intrachain disulfide couples C101 to C345. N349, N363, N381, and N464 each carry an N-linked (GlcNAc...) asparagine glycan. 2 cysteine pairs are disulfide-bonded: C452-C480 and C459-C481. S536, T538, and R543 together coordinate L-glutamate. N566 carries N-linked (GlcNAc...) asparagine glycosylation. The helical transmembrane segment at 580–601 (PAVWVMMFVMCLTVVAVTVFIF) threads the bilayer. Topologically, residues 602–626 (EYLSPVGYNRSLATGKRPGGSTFTI) are cytoplasmic. The discontinuously helical intramembrane region spans 627 to 638 (GKSIWLLWALVF). The interval 628-647 (KSIWLLWALVFNNSVPVENP) is pore-forming. Residues 639–650 (NNSVPVENPRGT) lie on the Cytoplasmic side of the membrane. Residues 651-671 (TSKIMVLVWAFFAVIFLASYT) form a helical membrane-spanning segment. Residues 672–840 (ANLAAFMIQE…EVMSSKLDID (169 aa)) are Extracellular-facing. An N-linked (GlcNAc...) asparagine glycan is attached at N712. 3 residues coordinate L-glutamate: S714, T715, and D756. A disulfide bond links C770 and C825. Residues 841–864 (NMAGVFYMLLVAMGLSLLVFAWEH) traverse the membrane as a helical segment. At 865 to 1323 (LVYWRLRHCL…AHFSSLESEV (459 aa)) the chain is on the cytoplasmic side. Disordered regions lie at residues 897-952 (EAAP…PGGA), 977-1112 (AAPR…SLGG), and 1201-1323 (PWAA…ESEV). Positions 899-929 (APPPAKPPPPPQPLPSPAYPAARPPPGPAPF) are enriched in pro residues. Over residues 931–940 (PRERAAADRW) the composition is skewed to basic and acidic residues. The segment covering 977 to 986 (AAPRGAAGRP) has biased composition (low complexity). A compositionally biased stretch (pro residues) spans 987–1001 (LSPPTTQPPQKPPPS). Residues 1030–1039 (AAAAAAVGPP) show a composition bias toward low complexity. Residues 1080-1092 (TAPPPRRAAPPPC) show a composition bias toward pro residues. The segment covering 1208–1228 (PRRRARCGCPRPHPHRPRASH) has biased composition (basic residues). An Omega-N-methylarginine modification is found at R1303. Position 1313 is a phosphoserine (S1313). Residues 1321–1323 (SEV) carry the PDZ-binding motif.

The protein belongs to the glutamate-gated ion channel (TC 1.A.10.1) family. NR2D/GRIN2D subfamily. As to quaternary structure, heterotetramer. Forms heterotetrameric channels composed of two GluN1/zeta subunits (GRIN1), and two identical GluN2/epsilon subunits (GRIN2A, GRIN2B, GRIN2C or GRIN2D) or GluN3 subunits (GRIN3A or GRIN3B) (in vitro). In vivo, the subunit composition may depend on the expression levels of the different subunits. Interacts with PDZ domains of PATJ and DLG4. In terms of tissue distribution, expressed in brain, mainly in the subcortical region.

The protein resides in the cell membrane. The protein localises to the postsynaptic cell membrane. The enzyme catalyses Ca(2+)(in) = Ca(2+)(out). It catalyses the reaction Na(+)(in) = Na(+)(out). The catalysed reaction is K(+)(in) = K(+)(out). Functionally, component of N-methyl-D-aspartate (NMDA) receptors (NMDARs) that function as heterotetrameric, ligand-gated cation channels with high calcium permeability and voltage-dependent block by Mg(2+). Participates in synaptic plasticity for learning and memory formation. Channel activation requires binding of the neurotransmitter L-glutamate to the GluN2 subunit, glycine or D-serine binding to the GluN1 subunit, plus membrane depolarization to eliminate channel inhibition by Mg(2+). NMDARs mediate simultaneously the potasium efflux and the influx of calcium and sodium. Each GluN2 subunit confers differential attributes to channel properties, including activation, deactivation and desensitization kinetics, pH sensitivity, Ca2(+) permeability, and binding to allosteric modulators. The polypeptide is Glutamate receptor ionotropic, NMDA 2D (Rattus norvegicus (Rat)).